The sequence spans 100 residues: Vesicle-associated membrane protein 3 (100 aa).

Serine 2 bears the N-acetylserine mark. Over 2–77 (STGPTAATGS…KRKYWWKNCK (76 aa)) the chain is Cytoplasmic. One can recognise a v-SNARE coiled-coil homology domain in the interval 14–74 (RLQQTQNQVD…AKLKRKYWWK (61 aa)). Glycyl lysine isopeptide (Lys-Gly) (interchain with G-Cter in ubiquitin) cross-links involve residues lysine 66, lysine 68, and lysine 77. Residues 78-98 (MWAIGITVLVIFIIIIIVWVV) traverse the membrane as a helical; Anchor for type IV membrane protein segment. Residues 99–100 (SS) are Vesicular-facing.

The protein belongs to the synaptobrevin family. As to quaternary structure, interacts with POPDC1 (via the C-terminus cytoplasmic tail). Interacts with BCAP31; involved in VAMP3 export from the endoplasmic reticulum. Interacts with BAIAP3; this interaction is increased in the presence of calcium. Interacts with PICALM. In terms of processing, ubiquitinated by RNF167 at Lys-66, Lys-68 and Lys-77, regulating the recycling endosome pathway. (Microbial infection) Targeted and hydrolyzed by C.botulinum neurotoxin type B (BoNT/B, botB) which hydrolyzes the 59-Gln-|-Phe-60 bond and probably inhibits neurotransmitter release. Post-translationally, (Microbial infection) Targeted and hydrolyzed by C.botulinum neurotoxin type D (BoNT/D, botD) which hydrolyzes the 42-Lys-|-Leu-43 bond and probably inhibits neurotransmitter release. Note that humans are not known to be infected by C.botulinum type D. In terms of processing, (Microbial infection) Targeted and hydrolyzed by C.botulinum neurotoxin type F (BoNT/F, botF) which hydrolyzes the 41-Gln-|-Lys-42 bond and probably inhibits neurotransmitter release.

Its subcellular location is the early endosome membrane. It is found in the recycling endosome membrane. The protein resides in the synapse. It localises to the synaptosome. In terms of biological role, SNARE involved in vesicular transport from the late endosomes to the trans-Golgi network. In Homo sapiens (Human), this protein is Vesicle-associated membrane protein 3 (VAMP3).